A 185-amino-acid chain; its full sequence is Gastrokine-1 (185 aa).

The N-terminal stretch at Met1–Ala20 is a signal peptide. A BRICHOS domain is found at Asn54 to Ala150. A disulfide bridge connects residues Cys81 and Cys142.

Belongs to the gastrokine family. In terms of tissue distribution, expressed in stomach (at protein level). No expression is detected in cancer tissue or gastric cancer cell lines.

It localises to the secreted. The protein localises to the cytoplasmic granule. It is found in the golgi apparatus. In terms of biological role, has mitogenic activity and may be involved in maintaining the integrity of the gastric mucosal epithelium. The polypeptide is Gastrokine-1 (GKN1) (Homo sapiens (Human)).